The primary structure comprises 1226 residues: MDSFDLALLQEWDLESLCVYEPDRNALRRKERERRNQETQQDDGTFNSSYSLFSEPYKTNKGDELSNRIQNTLGNYDEMKDFLTDRSNQSHLVGVPKPGVPQTPVNKIDEHFVADSRAQNQPSSICSTTTSTPAAVPVQQSKRGTMGWQKAGHPPSDGQQRATQQGSLRTLLGDGVGRQQPRAKQVCNVEVGLQTQERPPAMAAKHSSSGHCVQNFPPSLASKPSLVQQKPTAYVRPMDGQDQAPDESPKLKSSSETSVHCTSYRGVPASKPEPARAKAKLSKFSIPKQGEESRSGETNSCVEEIIREMTWLPPLSAIQAPGKVEPTKFPFPNKDSQLVSSGHNNPKKGDAEPESPDNGTSNTSMLEDDLKLSSDEEENEQQAAQRTALRALSDSAVVQQPNCRTSVPSSKGSSSSSSSGSSSSSSDSESSSGSDSETESSSSESEGSKPPHFSSPEAEPASSNKWQLDKWLNKVNPHKPPILIQNESHGSESNQYYNPVKEDVQDCGKVPDVCQPSLREKEIKSTCKEEQRPRTANKAPGSKGVKQKSPPAAVAVAVSAAAPPPAVPCAPAENAPAPARRSAGKKPTRRTERTSAGDGANCHRPEEPAAADALGTSVVVPPEPTKTRPCGNNRASHRKELRSSVTCEKRRTRGLSRIVPKSKEFIETESSSSSSSSDSDLESEQEEYPLSKAQTVAASASSGNDQRLKEAAANGGSGPRAPVGSINARTTSDIAKELEEQFYTLVPFGRNELLSPLKDSDEIRSLWVKIDLTLLSRIPEHLPQEPGVLSAPATKDSESAPPSHTSDTPAEKALPKSKRKRKCDNEDDYREIKKSQGEKDSSSRLATSTSNTLSANHCNMNINSVAIPINKNEKMLRSPISPLSDASKHKYTSEDLTSSSRPNGNSLFTSASSSKKPKADSQLQPHGGDLTKAAHNNSENIPLHKSRPQTKPWSPGSNGHRDCKRQKLVFDDMPRSADYFMQEAKRMKHKADAMVEKFGKALNYAEAALSFIECGNAMEQGPMESKSPYTMYSETVELIRYAMRLKTHSGPNATPEDKQLAALCYRCLALLYWRMFRLKRDHAVKYSKALIDYFKNSSKAAQAPSPWGASGKSTGTPSPMSPNPSPASSVGSQGSLSNASALSPSTIVSIPQRIHQMAANHVSITNSILHSYDYWEMADNLAKENREFFNDLDLLMGPVTLHSSMEHLVQYSQQGLHWLRNSAHLS.

A compositionally biased stretch (basic and acidic residues) spans 24 to 37 (RNALRRKERERRNQ). Disordered regions lie at residues 24–65 (RNAL…GDEL), 116–164 (SRAQ…RATQ), 197–299 (ERPP…GETN), 323–496 (KVEP…SNQY), and 523–728 (IKST…SINA). Residues 42–52 (DDGTFNSSYSL) are compositionally biased toward polar residues. The segment covering 123–132 (SSICSTTTST) has biased composition (low complexity). 2 stretches are compositionally biased toward polar residues: residues 251–261 (LKSSSETSVHC) and 334–344 (KDSQLVSSGHN). Residues 381–392 (QQAAQRTALRAL) show a composition bias toward low complexity. A compositionally biased stretch (polar residues) spans 396–408 (AVVQQPNCRTSVP). The span at 409 to 445 (SSKGSSSSSSSGSSSSSSDSESSSGSDSETESSSSES) shows a compositional bias: low complexity. Residues 485–496 (QNESHGSESNQY) show a composition bias toward polar residues. Over residues 523–533 (IKSTCKEEQRP) the composition is skewed to basic and acidic residues. Composition is skewed to low complexity over residues 550–561 (PPAAVAVAVSAA) and 569–579 (CAPAENAPAPA). Basic and acidic residues predominate over residues 589–607 (RRTERTSAGDGANCHRPEE). Positions 668–678 (TESSSSSSSSD) are enriched in low complexity. Residues 692-705 (KAQTVAASASSGND) show a composition bias toward polar residues. A Phosphoserine modification is found at serine 755. 3 disordered regions span residues 783–856 (PQEP…LSAN), 879–964 (PISP…RDCK), and 1100–1138 (AAQA…SLSN). Over residues 830–842 (REIKKSQGEKDSS) the composition is skewed to basic and acidic residues. Residues 843-856 (SRLATSTSNTLSAN) are compositionally biased toward polar residues. Position 881 is a phosphoserine (serine 881). The segment covering 894–909 (EDLTSSSRPNGNSLFT) has biased composition (polar residues).

Belongs to the AF4 family. Preferentially expressed in lymphoid tissues, highest levels being found in the thymus.

Its subcellular location is the nucleus. Putative transcription activator that may function in lymphoid development and oncogenesis. Binds, in vitro, to double-stranded DNA. This Homo sapiens (Human) protein is AF4/FMR2 family member 3.